An 819-amino-acid polypeptide reads, in one-letter code: Outer membrane usher protein CssD (819 aa).

Belongs to the fimbrial export usher family.

The protein resides in the cell outer membrane. Involved in the export and assembly of C6 fimbrial subunits across the outer membrane. This is Outer membrane usher protein CssD (cssD) from Escherichia coli.